The chain runs to 197 residues: MTDQKLAKAKVIFVLGGPGSGKGTQCEKLVQKFHFNHLSSGDLLRAEVQSGSPKGKELKAMMERGELVPLEVVLALLKEAMIKLVDKNCHFLIDGYPRELDQGIKFEKEVCPCLCVINFDVSEEVMRKRLLKRAETSNRVDDNEETIVKRFRTFNELTKPVIEHYKQQNKVITIDASGTVDAIFDKVNHELQKFGVK.

ATP is bound at residue 19–24 (GSGKGT). The interval 39-68 (SSGDLLRAEVQSGSPKGKELKAMMERGELV) is NMP. AMP-binding positions include S40, R45, 95–98 (GYPR), and Q102. The segment at 132-142 (KRAETSNRVDD) is LID. An ATP-binding site is contributed by R133. Residues R139 and R150 each contribute to the AMP site. G178 serves as a coordination point for ATP.

The protein belongs to the adenylate kinase family. AK1 subfamily. In terms of assembly, monomer. Mg(2+) serves as cofactor.

The protein localises to the cytoplasm. The enzyme catalyses AMP + ATP = 2 ADP. Its pathway is purine metabolism; purine nucleotide biosynthesis. Functionally, catalyzes the reversible transfer of the terminal phosphate group between ATP and AMP. Plays an important role in cellular energy homeostasis and in adenine nucleotide metabolism. The sequence is that of Adenylate kinase 1 from Schistosoma mansoni (Blood fluke).